The following is a 635-amino-acid chain: MIDFTCYPRLSRIQTPEDLRAFQESELRAVADELRNYLIESVGLSGGHFAAGLGVVELTIALHYLYCTPIDQLVWDVGHQTYPHKILTGRRDKISTVKHQGGLAPFPKREESIYDTFGVGHSSTSISAALGMAIVAQRNGDERKVVAIIGDGAMTAGMAYEALNHAGGMSPAPNLLVILNDNRMSISEAVGGLTKMLGRATGSKALNAIREGGKRIFGDKKTNATARFLRRWEEHWKGMFVPSTLFEEMGFHYTGPIDGHDLPALLGALKTLRTLKGPQLLHVITTKGKGYELAEGDQIGYHAVAPFDPQKGLIKAGAKKQTYTDVFSEWLCDMAAVEPRLLAITPAMREGSGLVRFSQEYPQRYFDVAIAEQHAITLAAGMATQGAKPVVAIYSTFLQRGYDQLVHDVALQKLDVLFAVDRGGVVGPDGATHAGNLDLSFLRCVPNMMLMAPADEAECRKMLSTGFHYSGPVAVRYPRGTGPGVVPSAELDVLPVGVAQLRHSGTRIALLGFGVCVAPAEQVGRRLGLTVVNMRFIKPLDRTLLLELARTHEVFVTIEDNVVAGGAGSGVAELLNAEGIVLPIVHLGLPDAFQQHASREDLLAEAGIDAAGVYAALLSRWPDLAVQNHPLSAVS.

Thiamine diphosphate contacts are provided by residues H79 and 120–122; that span reads GHS. Residue D151 participates in Mg(2+) binding. Thiamine diphosphate-binding positions include 152-153, N182, Y291, and E372; that span reads GA. Residue N182 participates in Mg(2+) binding.

The protein belongs to the transketolase family. DXPS subfamily. Homodimer. The cofactor is Mg(2+). Requires thiamine diphosphate as cofactor.

It catalyses the reaction D-glyceraldehyde 3-phosphate + pyruvate + H(+) = 1-deoxy-D-xylulose 5-phosphate + CO2. It participates in metabolic intermediate biosynthesis; 1-deoxy-D-xylulose 5-phosphate biosynthesis; 1-deoxy-D-xylulose 5-phosphate from D-glyceraldehyde 3-phosphate and pyruvate: step 1/1. Functionally, catalyzes the acyloin condensation reaction between C atoms 2 and 3 of pyruvate and glyceraldehyde 3-phosphate to yield 1-deoxy-D-xylulose-5-phosphate (DXP). The sequence is that of 1-deoxy-D-xylulose-5-phosphate synthase from Xylella fastidiosa (strain M23).